A 66-amino-acid polypeptide reads, in one-letter code: Large ribosomal subunit protein uL29 (66 aa).

This sequence belongs to the universal ribosomal protein uL29 family.

The protein is Large ribosomal subunit protein uL29 of Mesorhizobium japonicum (strain LMG 29417 / CECT 9101 / MAFF 303099) (Mesorhizobium loti (strain MAFF 303099)).